The chain runs to 376 residues: Serpin B9 (376 aa).

N-acetylmethionine is present on Met-1.

This sequence belongs to the serpin family. Ov-serpin subfamily.

It is found in the cytoplasm. Its function is as follows. Granzyme B inhibitor. This chain is Serpin B9 (SERPINB9), found in Homo sapiens (Human).